A 963-amino-acid chain; its full sequence is Protocadherin alpha-C1 (963 aa).

The signal sequence occupies residues 1-18 (MVGWGVAVLCLWVSCGAA). Cadherin domains are found at residues 19-124 (AGQL…SPLF), 125-233 (PAGD…APVF), 234-340 (ERSV…APEL), 349-445 (VPED…TPSF), and 446-555 (PQPQ…YPVI). The Extracellular segment spans residues 19 to 683 (AGQLEYSVPE…GGQLSAQNLY (665 aa)). Asn-38 carries N-linked (GlcNAc...) asparagine glycosylation. 2 N-linked (GlcNAc...) asparagine glycosylation sites follow: Asn-248 and Asn-274. N-linked (GlcNAc...) asparagine glycosylation is present at Asn-562. In terms of domain architecture, Cadherin 6 spans 570-667 (VPRSARTGHL…NSVPQLLPDF (98 aa)). Residues 684-704 (LVIALACISFLFLGCLLFFVC) traverse the membrane as a helical segment. The Cytoplasmic portion of the chain corresponds to 705–963 (TKLHQSPGCC…GNSTTDNSDQ (259 aa)). PXXP repeat units follow at residues 812–815 (PRQP), 845–848 (PGGP), 886–889 (PGNP), and 904–907 (PGSP). The interval 812–907 (PRQPNPDWRY…PDKFIIPGSP (96 aa)) is 4 X 4 AA repeats of P-X-X-P. The interval 844-902 (GPGGPDQQWPTVSSATPEPEAGEVSPPVGAGVNSNSWTFKYGPGNPKQSGPGELPDKFI) is disordered. Residues 914-963 (QEPANSQIDKSDFITFGKKEETKKKKKKKKGNKTQEKKEKGNSTTDNSDQ) are disordered. Basic and acidic residues predominate over residues 922–936 (DKSDFITFGKKEETK).

It is found in the cell membrane. Potential calcium-dependent cell-adhesion protein. May be involved in the establishment and maintenance of specific neuronal connections in the brain. In Pan troglodytes (Chimpanzee), this protein is Protocadherin alpha-C1 (PCDHAC1).